A 184-amino-acid polypeptide reads, in one-letter code: Inactive ribonuclease-like protein 9 (184 aa).

Residues 1-25 (MKPLVIKFAWPLPLLLLLLLPPKLQ) form the signal peptide. Intrachain disulfides connect Cys93/Cys148, Cys111/Cys163, and Cys118/Cys125. N-linked (GlcNAc...) asparagine glycosylation is found at Asn147 and Asn179.

This sequence belongs to the pancreatic ribonuclease family.

The protein localises to the secreted. Does not exhibit any ribonuclease activity. The sequence is that of Inactive ribonuclease-like protein 9 (Rnase9) from Mus musculus (Mouse).